A 152-amino-acid chain; its full sequence is Nucleoside diphosphate kinase (152 aa).

ATP contacts are provided by K11, F59, R87, T93, R104, and N114. H117 (pros-phosphohistidine intermediate) is an active-site residue.

The protein belongs to the NDK family. Homotetramer. Mg(2+) serves as cofactor.

The protein localises to the cytoplasm. It carries out the reaction dZDP + ATP = dZTP + ADP. The catalysed reaction is a 2'-deoxyribonucleoside 5'-diphosphate + ATP = a 2'-deoxyribonucleoside 5'-triphosphate + ADP. It catalyses the reaction a ribonucleoside 5'-diphosphate + ATP = a ribonucleoside 5'-triphosphate + ADP. Its pathway is purine metabolism. Functionally, major role in the synthesis of nucleoside triphosphates other than ATP. The ATP gamma phosphate is transferred to the NDP beta phosphate via a ping-pong mechanism, using a phosphorylated active-site intermediate. In terms of biological role, (Microbial infection) Catalyzes the phosphorylation of dZDP to dZTP, when the bacterium is infected by a phage that produces the substrate for the synthesis of dZTP (2- amino-2'-deoxyadenosine 5'-triphosphate), which is then used by the phage as a DNA polymerase substrate. The polypeptide is Nucleoside diphosphate kinase (Synechococcus sp. (strain CC9311)).